Reading from the N-terminus, the 277-residue chain is Diaminopimelate epimerase (277 aa).

The substrate site is built by Asn-13, Gln-46, and Asn-66. Cys-75 (proton donor) is an active-site residue. Substrate contacts are provided by residues 76–77 (GN), Asn-160, Asn-193, and 211–212 (ER). The active-site Proton acceptor is the Cys-220. Substrate is bound at residue 221–222 (GS).

It belongs to the diaminopimelate epimerase family. Homodimer.

It localises to the cytoplasm. The enzyme catalyses (2S,6S)-2,6-diaminopimelate = meso-2,6-diaminopimelate. The protein operates within amino-acid biosynthesis; L-lysine biosynthesis via DAP pathway; DL-2,6-diaminopimelate from LL-2,6-diaminopimelate: step 1/1. Catalyzes the stereoinversion of LL-2,6-diaminopimelate (L,L-DAP) to meso-diaminopimelate (meso-DAP), a precursor of L-lysine and an essential component of the bacterial peptidoglycan. In Legionella pneumophila (strain Corby), this protein is Diaminopimelate epimerase.